A 38-amino-acid polypeptide reads, in one-letter code: Large ribosomal subunit protein bL36 (38 aa).

It belongs to the bacterial ribosomal protein bL36 family.

The polypeptide is Large ribosomal subunit protein bL36 (Limosilactobacillus fermentum (strain NBRC 3956 / LMG 18251) (Lactobacillus fermentum)).